The chain runs to 186 residues: Ribosome-recycling factor (186 aa).

Belongs to the RRF family.

Its subcellular location is the cytoplasm. In terms of biological role, responsible for the release of ribosomes from messenger RNA at the termination of protein biosynthesis. May increase the efficiency of translation by recycling ribosomes from one round of translation to another. The sequence is that of Ribosome-recycling factor from Burkholderia cenocepacia (strain HI2424).